Consider the following 303-residue polypeptide: Recombination-associated protein RdgC (303 aa).

The protein belongs to the RdgC family.

The protein resides in the cytoplasm. It is found in the nucleoid. In terms of biological role, may be involved in recombination. This Aeromonas hydrophila subsp. hydrophila (strain ATCC 7966 / DSM 30187 / BCRC 13018 / CCUG 14551 / JCM 1027 / KCTC 2358 / NCIMB 9240 / NCTC 8049) protein is Recombination-associated protein RdgC.